Reading from the N-terminus, the 456-residue chain is Bifunctional protein GlmU (456 aa).

Positions 1–229 (MLNSAMSVVI…ISETDGVNNR (229 aa)) are pyrophosphorylase. UDP-N-acetyl-alpha-D-glucosamine-binding positions include 11-14 (LAAG), lysine 25, glutamine 76, 81-82 (GT), 103-105 (YGD), glycine 140, glutamate 154, asparagine 169, and asparagine 227. Aspartate 105 lines the Mg(2+) pocket. Mg(2+) is bound at residue asparagine 227. The interval 230-250 (LQLSRLERIYQAEQAEKLLLS) is linker. The tract at residues 251-456 (GVMLRDPARF…QGWQRPVKKK (206 aa)) is N-acetyltransferase. 2 residues coordinate UDP-N-acetyl-alpha-D-glucosamine: arginine 333 and lysine 351. The active-site Proton acceptor is histidine 363. Residues tyrosine 366 and asparagine 377 each coordinate UDP-N-acetyl-alpha-D-glucosamine. Acetyl-CoA contacts are provided by residues alanine 380, 386-387 (NY), serine 405, alanine 423, and arginine 440.

In the N-terminal section; belongs to the N-acetylglucosamine-1-phosphate uridyltransferase family. The protein in the C-terminal section; belongs to the transferase hexapeptide repeat family. In terms of assembly, homotrimer. The cofactor is Mg(2+).

It localises to the cytoplasm. The enzyme catalyses alpha-D-glucosamine 1-phosphate + acetyl-CoA = N-acetyl-alpha-D-glucosamine 1-phosphate + CoA + H(+). It catalyses the reaction N-acetyl-alpha-D-glucosamine 1-phosphate + UTP + H(+) = UDP-N-acetyl-alpha-D-glucosamine + diphosphate. It participates in nucleotide-sugar biosynthesis; UDP-N-acetyl-alpha-D-glucosamine biosynthesis; N-acetyl-alpha-D-glucosamine 1-phosphate from alpha-D-glucosamine 6-phosphate (route II): step 2/2. Its pathway is nucleotide-sugar biosynthesis; UDP-N-acetyl-alpha-D-glucosamine biosynthesis; UDP-N-acetyl-alpha-D-glucosamine from N-acetyl-alpha-D-glucosamine 1-phosphate: step 1/1. The protein operates within bacterial outer membrane biogenesis; LPS lipid A biosynthesis. Functionally, catalyzes the last two sequential reactions in the de novo biosynthetic pathway for UDP-N-acetylglucosamine (UDP-GlcNAc). The C-terminal domain catalyzes the transfer of acetyl group from acetyl coenzyme A to glucosamine-1-phosphate (GlcN-1-P) to produce N-acetylglucosamine-1-phosphate (GlcNAc-1-P), which is converted into UDP-GlcNAc by the transfer of uridine 5-monophosphate (from uridine 5-triphosphate), a reaction catalyzed by the N-terminal domain. This Salmonella schwarzengrund (strain CVM19633) protein is Bifunctional protein GlmU.